A 207-amino-acid polypeptide reads, in one-letter code: Octanoyltransferase (207 aa).

Positions A27–A203 constitute a BPL/LPL catalytic domain. Substrate is bound by residues R66–H73, S133–G135, and G146–A148. C164 (acyl-thioester intermediate) is an active-site residue.

The protein belongs to the LipB family.

It localises to the cytoplasm. The catalysed reaction is octanoyl-[ACP] + L-lysyl-[protein] = N(6)-octanoyl-L-lysyl-[protein] + holo-[ACP] + H(+). It participates in protein modification; protein lipoylation via endogenous pathway; protein N(6)-(lipoyl)lysine from octanoyl-[acyl-carrier-protein]: step 1/2. Catalyzes the transfer of endogenously produced octanoic acid from octanoyl-acyl-carrier-protein onto the lipoyl domains of lipoate-dependent enzymes. Lipoyl-ACP can also act as a substrate although octanoyl-ACP is likely to be the physiological substrate. The protein is Octanoyltransferase of Neisseria meningitidis serogroup A / serotype 4A (strain DSM 15465 / Z2491).